We begin with the raw amino-acid sequence, 214 residues long: MTTLADLRINYSRASLDEADVAPDPFAQFDRWFKEALAAKLPEPNTMTLATVGENGRPSARIVLIKGVDERGFVFFTNYESRKGRDLAAHPYAALLFYWIELERQVRIEGRIEKTSTDESDRYFASRPLGSRIGAWASEQSAVIDSRATLEAREKAVAERYGENPPRPPQWGGYRVVPDAIEFWQGRPSRLHDRLLYTRDAAAAPDWTISRLSP.

Substrate is bound by residues 8-11 (RINY) and Lys-66. FMN contacts are provided by residues 61 to 66 (RIVLIK), 76 to 77 (FT), Arg-82, Lys-83, and Gln-105. The substrate site is built by Tyr-123, Arg-127, and Ser-131. Residues 140–141 (QS) and Trp-184 contribute to the FMN site. A substrate-binding site is contributed by 190–192 (RLH). An FMN-binding site is contributed by Arg-194.

It belongs to the pyridoxamine 5'-phosphate oxidase family. As to quaternary structure, homodimer. FMN is required as a cofactor.

It carries out the reaction pyridoxamine 5'-phosphate + O2 + H2O = pyridoxal 5'-phosphate + H2O2 + NH4(+). It catalyses the reaction pyridoxine 5'-phosphate + O2 = pyridoxal 5'-phosphate + H2O2. Its pathway is cofactor metabolism; pyridoxal 5'-phosphate salvage; pyridoxal 5'-phosphate from pyridoxamine 5'-phosphate: step 1/1. It participates in cofactor metabolism; pyridoxal 5'-phosphate salvage; pyridoxal 5'-phosphate from pyridoxine 5'-phosphate: step 1/1. Its function is as follows. Catalyzes the oxidation of either pyridoxine 5'-phosphate (PNP) or pyridoxamine 5'-phosphate (PMP) into pyridoxal 5'-phosphate (PLP). This is Pyridoxine/pyridoxamine 5'-phosphate oxidase from Burkholderia ambifaria (strain ATCC BAA-244 / DSM 16087 / CCUG 44356 / LMG 19182 / AMMD) (Burkholderia cepacia (strain AMMD)).